The following is a 196-amino-acid chain: Anthranilate synthase component 2 (196 aa).

In terms of domain architecture, Glutamine amidotransferase type-1 spans 3-196 (NILLLDNFDS…INWASLKYKG (194 aa)). 57–59 (GPS) contacts L-glutamine. The Nucleophile; for GATase activity role is filled by Cys-84. L-glutamine contacts are provided by residues Gln-88 and 134–135 (SL). Catalysis depends on for GATase activity residues His-170 and Glu-172.

Heterotetramer consisting of two non-identical subunits: a beta subunit (TrpG) and a large alpha subunit (TrpE).

The enzyme catalyses chorismate + L-glutamine = anthranilate + pyruvate + L-glutamate + H(+). The protein operates within amino-acid biosynthesis; L-tryptophan biosynthesis; L-tryptophan from chorismate: step 1/5. Functionally, part of a heterotetrameric complex that catalyzes the two-step biosynthesis of anthranilate, an intermediate in the biosynthesis of L-tryptophan. In the first step, the glutamine-binding beta subunit (TrpG) of anthranilate synthase (AS) provides the glutamine amidotransferase activity which generates ammonia as a substrate that, along with chorismate, is used in the second step, catalyzed by the large alpha subunit of AS (TrpE) to produce anthranilate. In the absence of TrpG, TrpE can synthesize anthranilate directly from chorismate and high concentrations of ammonia. The polypeptide is Anthranilate synthase component 2 (trpG) (Buchnera aphidicola subsp. Schizaphis graminum (strain Sg)).